The chain runs to 137 residues: MIIGIGNDLCNIERIQRSLDRFGERFEQRVFTPHEIAKARGRRRVAETYAKRFAAKEAMAKALGTGVPRAGVHWKHLGVINLPSGKPGFELTGGAAARLAKLTPPGHRAVVHLTLTDDHPWAEAQVIIEAIPVAEPS.

Positions 8 and 57 each coordinate Mg(2+).

It belongs to the P-Pant transferase superfamily. AcpS family. Mg(2+) is required as a cofactor.

The protein localises to the cytoplasm. The catalysed reaction is apo-[ACP] + CoA = holo-[ACP] + adenosine 3',5'-bisphosphate + H(+). Functionally, transfers the 4'-phosphopantetheine moiety from coenzyme A to a Ser of acyl-carrier-protein. In Hyphomonas neptunium (strain ATCC 15444), this protein is Holo-[acyl-carrier-protein] synthase.